The sequence spans 419 residues: Tyrosine--tRNA ligase 2 (419 aa).

Tyr-34 lines the L-tyrosine pocket. The 'HIGH' region motif lies at 39-48 (PTGDSMHIGH). 2 residues coordinate L-tyrosine: Tyr-168 and Gln-172. The short motif at 230 to 234 (KFGKS) is the 'KMSKS' region element. Residue Lys-233 coordinates ATP. The S4 RNA-binding domain maps to 352–418 (KNIVEWLVDL…GKKNYSLVKL (67 aa)).

Belongs to the class-I aminoacyl-tRNA synthetase family. TyrS type 1 subfamily. Homodimer.

It localises to the cytoplasm. It carries out the reaction tRNA(Tyr) + L-tyrosine + ATP = L-tyrosyl-tRNA(Tyr) + AMP + diphosphate + H(+). Its function is as follows. Catalyzes the attachment of tyrosine to tRNA(Tyr) in a two-step reaction: tyrosine is first activated by ATP to form Tyr-AMP and then transferred to the acceptor end of tRNA(Tyr). This chain is Tyrosine--tRNA ligase 2, found in Bacillus cereus (strain ZK / E33L).